A 362-amino-acid chain; its full sequence is Somatostatin receptor type 5 (362 aa).

Over residues 1-10 (MEPLSLTSTP) the composition is skewed to polar residues. The disordered stretch occupies residues 1-24 (MEPLSLTSTPSWNASAASSSSHNW). At 1–35 (MEPLSLTSTPSWNASAASSSSHNWSLVDPVSPMGA) the chain is on the extracellular side. The segment covering 11–24 (SWNASAASSSSHNW) has biased composition (low complexity). Residues Asn13 and Asn23 are each glycosylated (N-linked (GlcNAc...) asparagine). The chain crosses the membrane as a helical span at residues 36-63 (RAVLVPVLYLLVCTVGLGGNTLVIYVVL). Residues 64–73 (RYAKMKTVTN) lie on the Cytoplasmic side of the membrane. The chain crosses the membrane as a helical span at residues 74–99 (VYILNLAVADVLFMLGLPFLATQNAV). Residues 100-110 (SYWPFGSFLCR) lie on the Extracellular side of the membrane. Cys109 and Cys184 are disulfide-bonded. The chain crosses the membrane as a helical span at residues 111-132 (LVMTLDGINQFTSIFCLMVMSV). Over 133 to 154 (DRYLAVVHPLRSARWRRPRVAK) the chain is Cytoplasmic. Residues 155 to 175 (LASAAVWVFSLLMSLPLLVFA) traverse the membrane as a helical segment. At 176–195 (DVQEGWGTCNLSWPEPVGLW) the chain is on the extracellular side. An N-linked (GlcNAc...) asparagine glycan is attached at Asn185. Residues 196 to 220 (GAAFITYTSVLGFFGPLLVICLCYL) traverse the membrane as a helical segment. Over 221-246 (LIVVKVKAAGMRVGSSRRRRSERKVT) the chain is Cytoplasmic. The helical transmembrane segment at 247 to 272 (RMVVVVVLVFVGCWLPFFIVNIVNLA) threads the bilayer. Residues 273-282 (FTLPEEPTSA) are Extracellular-facing. The helical transmembrane segment at 283 to 307 (GLYFFVVVLSYANSCANPLLYGFLS) threads the bilayer. At 308-362 (DNFRQSFRKALCLRRGYGVEDADAIEPRPDKSGRPQTTLPTRSCEANGLMQTSRL) the chain is on the cytoplasmic side. A lipid anchor (S-palmitoyl cysteine; by ZDHHC5) is attached at Cys319. The tract at residues 330–362 (DAIEPRPDKSGRPQTTLPTRSCEANGLMQTSRL) is disordered.

Belongs to the G-protein coupled receptor 1 family. Heterodimer with SSTR2. Heterodimerization with SSTR2 increases cell growth inhibition activity of SSTR2. Post-translationally, palmitoylated at Cys-319 by ZDHHC5, but not ZDHHC8. Palmitoylation creates an additional intracellular loop which is thought to be important for efficient coupling to G-proteins and may target the protein to lipid rafts. As to expression, expressed in adult brain but not in liver, heart, spleen, or kidney.

The protein resides in the cell membrane. Its function is as follows. Receptor for somatostatin-28. The activity of this receptor is mediated by G proteins which inhibit adenylyl cyclase. Increases cell growth inhibition activity of SSTR2 following heterodimerization. This chain is Somatostatin receptor type 5 (Sstr5), found in Mus musculus (Mouse).